A 232-amino-acid chain; its full sequence is Ribonuclease P protein component 3 (232 aa).

This sequence belongs to the eukaryotic/archaeal RNase P protein component 3 family. As to quaternary structure, consists of a catalytic RNA component and at least 4-5 protein subunits.

It localises to the cytoplasm. The enzyme catalyses Endonucleolytic cleavage of RNA, removing 5'-extranucleotides from tRNA precursor.. In terms of biological role, part of ribonuclease P, a protein complex that generates mature tRNA molecules by cleaving their 5'-ends. This chain is Ribonuclease P protein component 3, found in Halobacterium salinarum (strain ATCC 29341 / DSM 671 / R1).